Consider the following 394-residue polypeptide: NAD(P)H-quinone oxidoreductase subunit H (394 aa).

The protein belongs to the complex I 49 kDa subunit family. As to quaternary structure, NDH-1 can be composed of about 15 different subunits; different subcomplexes with different compositions have been identified which probably have different functions.

It is found in the cellular thylakoid membrane. It carries out the reaction a plastoquinone + NADH + (n+1) H(+)(in) = a plastoquinol + NAD(+) + n H(+)(out). It catalyses the reaction a plastoquinone + NADPH + (n+1) H(+)(in) = a plastoquinol + NADP(+) + n H(+)(out). NDH-1 shuttles electrons from an unknown electron donor, via FMN and iron-sulfur (Fe-S) centers, to quinones in the respiratory and/or the photosynthetic chain. The immediate electron acceptor for the enzyme in this species is believed to be plastoquinone. Couples the redox reaction to proton translocation, and thus conserves the redox energy in a proton gradient. Cyanobacterial NDH-1 also plays a role in inorganic carbon-concentration. The polypeptide is NAD(P)H-quinone oxidoreductase subunit H (Prochlorococcus marinus (strain MIT 9211)).